We begin with the raw amino-acid sequence, 273 residues long: Urease accessory protein UreD (273 aa).

The protein belongs to the UreD family. In terms of assembly, ureD, UreF and UreG form a complex that acts as a GTP-hydrolysis-dependent molecular chaperone, activating the urease apoprotein by helping to assemble the nickel containing metallocenter of UreC. The UreE protein probably delivers the nickel.

The protein localises to the cytoplasm. Functionally, required for maturation of urease via the functional incorporation of the urease nickel metallocenter. This chain is Urease accessory protein UreD, found in Rhizobium leguminosarum bv. trifolii (strain WSM2304).